We begin with the raw amino-acid sequence, 294 residues long: N-acetylmuramic acid 6-phosphate etherase (294 aa).

The 164-residue stretch at 56–219 (TSQALKKGGR…STLSMVSVGK (164 aa)) folds into the SIS domain. Glu-84 acts as the Proton donor in catalysis. Glu-115 is a catalytic residue.

This sequence belongs to the GCKR-like family. MurNAc-6-P etherase subfamily. As to quaternary structure, homodimer.

The enzyme catalyses N-acetyl-D-muramate 6-phosphate + H2O = N-acetyl-D-glucosamine 6-phosphate + (R)-lactate. It functions in the pathway amino-sugar metabolism; 1,6-anhydro-N-acetylmuramate degradation. The protein operates within amino-sugar metabolism; N-acetylmuramate degradation. It participates in cell wall biogenesis; peptidoglycan recycling. Functionally, specifically catalyzes the cleavage of the D-lactyl ether substituent of MurNAc 6-phosphate, producing GlcNAc 6-phosphate and D-lactate. Together with AnmK, is also required for the utilization of anhydro-N-acetylmuramic acid (anhMurNAc) either imported from the medium or derived from its own cell wall murein, and thus plays a role in cell wall recycling. The protein is N-acetylmuramic acid 6-phosphate etherase of Francisella philomiragia subsp. philomiragia (strain ATCC 25017 / CCUG 19701 / FSC 153 / O#319-036).